Reading from the N-terminus, the 399-residue chain is Rhodopsin, G0-coupled (399 aa).

Topologically, residues 1–17 (MPFPLNRTDTALVISPS) are extracellular. Residue N6 is glycosylated (N-linked (GlcNAc...) asparagine). Residues 18-43 (EFRIIGIFISICCIIGVLGNLLIIIV) traverse the membrane as a helical segment. Residues 44–55 (FAKRRSVRRPIN) lie on the Cytoplasmic side of the membrane. Residues 56–81 (FFVLNLAVSDLIVALLGYPMTAASAF) form a helical membrane-spanning segment. The Extracellular portion of the chain corresponds to 82–95 (SNRWIFDNIGCKIY). A disulfide bridge connects residues C92 and C169. The helical transmembrane segment at 96 to 115 (AFLCFNSGVISIMTHAALSF) threads the bilayer. The Cytoplasmic segment spans residues 116 to 134 (CRYIIICQYGYRKKITQTT). Residues 135-158 (VLRTLFSIWSFAMFWTLSPLFGWS) form a helical membrane-spanning segment. Topologically, residues 159–182 (SYVIEVVPVSCSVNWYGHGLGDVS) are extracellular. A helical membrane pass occupies residues 183-210 (YTISVIVAVYVFPLSIIVFSYGMILQEK). At 211-240 (VCKDSRKNGIRAQQRYTPRFIQDIEQRVTF) the chain is on the cytoplasmic side. Residues 241 to 263 (ISFLMMAAFMVAWTPYAIMSALA) traverse the membrane as a helical segment. Topologically, residues 264–271 (IGSFNVEN) are extracellular. A helical transmembrane segment spans residues 272-295 (SFAALPTLFAKASCAYNPFIYAFT). Position 282 is an N6-(retinylidene)lysine (K282). The Cytoplasmic segment spans residues 296-399 (NANFRDTVVE…NTFTADFSVI (104 aa)).

Belongs to the G-protein coupled receptor 1 family. Opsin subfamily. In terms of processing, phosphorylated on some or all of the serine and threonine residues present in the C-terminal region. As to expression, retina. Expressed in the hyperpolarizing cell layer of the photoreceptor cells with its photoreceptive region adjacent to the lens.

The protein localises to the membrane. Functionally, visual pigments are the light-absorbing molecules that mediate vision. They consist of an apoprotein, opsin, covalently linked to cis-retinal. In Mizuhopecten yessoensis (Japanese scallop), this protein is Rhodopsin, G0-coupled (SCOP2).